A 41-amino-acid chain; its full sequence is Hadrurin (41 aa).

It belongs to the non-disulfide-bridged peptide (NDBP) superfamily. Long chain multifunctional peptide (group 2) family. As to expression, expressed by the venom gland.

It is found in the secreted. In terms of biological role, antimicrobial activity against S.typhimurium, K.pneumoniae, E.cloacae, P.aeruginosa, E.coli and S.marcescens. Also shows hemolytic activity when tested in human erythrocytes. This Hoffmannihadrurus aztecus (Mexican scorpion) protein is Hadrurin.